Here is a 254-residue protein sequence, read N- to C-terminus: Probable protein S-acyltransferase 15 (254 aa).

Helical transmembrane passes span 1-21 (MGFV…GLQS) and 28-48 (ALLF…CVLV). The DHHC domain maps to 75–125 (RKCDKCFAYKPLRTHHCRVCRRCVLKMDHHCLWINNCVGYANYKAFFILVF). Residue cysteine 105 is the S-palmitoyl cysteine intermediate of the active site. 2 helical membrane-spanning segments follow: residues 119-139 (AFFI…VLLV) and 164-184 (IFMI…IYLI).

This sequence belongs to the DHHC palmitoyltransferase family.

The protein resides in the endoplasmic reticulum membrane. Its subcellular location is the cytoplasmic vesicle membrane. The catalysed reaction is L-cysteinyl-[protein] + hexadecanoyl-CoA = S-hexadecanoyl-L-cysteinyl-[protein] + CoA. In terms of biological role, palmitoyl acyltransferase. The polypeptide is Probable protein S-acyltransferase 15 (PAT15) (Arabidopsis thaliana (Mouse-ear cress)).